Consider the following 385-residue polypeptide: Putative UDP-N-acetylglucosamine 2-epimerase (385 aa).

Belongs to the UDP-N-acetylglucosamine 2-epimerase family.

The protein localises to the cytoplasm. It carries out the reaction UDP-N-acetyl-alpha-D-glucosamine = UDP-N-acetyl-alpha-D-mannosamine. This is Putative UDP-N-acetylglucosamine 2-epimerase from Clostridium acetobutylicum (strain ATCC 824 / DSM 792 / JCM 1419 / IAM 19013 / LMG 5710 / NBRC 13948 / NRRL B-527 / VKM B-1787 / 2291 / W).